The primary structure comprises 1875 residues: Neuron navigator 1 (1875 aa).

At methionine 1 the chain carries N-acetylmethionine. Residues 1–63 (MLGSSVKSVQ…GGSGSMAKAS (63 aa)) are disordered. A phosphoserine mark is found at serine 93 and serine 145. Disordered regions lie at residues 115–230 (SDDM…EERA) and 280–339 (SSLR…VGGS). A Phosphothreonine modification is found at threonine 162. Residues serine 197 and serine 202 each carry the phosphoserine modification. A coiled-coil region spans residues 258–283 (ESQRKRTVQNVLDLRQNLEETMSSLR). Over residues 280-291 (SSLRGSQVTHSS) the composition is skewed to polar residues. Phosphoserine is present on residues serine 299, serine 311, serine 315, serine 365, and serine 394. The segment covering 304-318 (PRSVSSLSNRSSPLS) has biased composition (low complexity). 2 disordered regions span residues 391 to 463 (GYMS…RTDS) and 477 to 783 (SESE…AELP). Composition is skewed to low complexity over residues 414 to 428 (DESS…DASD) and 436 to 456 (NASS…RSST). 4 positions are modified to phosphoserine: serine 455, serine 477, serine 479, and serine 493. The span at 479–489 (SEEKTPKKLEY) shows a compositional bias: basic and acidic residues. A compositionally biased stretch (basic and acidic residues) spans 506–522 (ERPESCDDASKGGELKK). Serine 531 carries the post-translational modification Phosphoserine. Threonine 537 carries the post-translational modification Phosphothreonine. A Phosphoserine modification is found at serine 544. Residue threonine 547 is modified to Phosphothreonine. Over residues 558 to 569 (GKPEGKATDKGK) the composition is skewed to basic and acidic residues. Position 575 is a phosphothreonine (threonine 575). Residues 584 to 594 (AGRDRLSDAKK) are compositionally biased toward basic and acidic residues. Composition is skewed to polar residues over residues 618–638 (GTAT…QKSS) and 648–658 (RKTSLDVSNSV). Serine 651 is subject to Phosphoserine. Residue arginine 690 is modified to Omega-N-methylarginine. 2 stretches are compositionally biased toward polar residues: residues 696–712 (VSSS…QGGL) and 726–735 (GRSTPAPVNQ). Positions 733 to 758 (VNQTDREKEKAKAKAVALDSDNISLK) form a coiled coil. Residues serine 752, serine 756, serine 762, serine 799, and serine 810 each carry the phosphoserine modification. Polar residues predominate over residues 753-772 (DNISLKSIGSPESTPKNQAS). 2 disordered regions span residues 800–840 (LANL…PLPS) and 893–982 (MSLP…SPPA). 2 stretches are compositionally biased toward low complexity: residues 807 to 818 (NSNSLDLPSSSD) and 893 to 902 (MSLPSAFPSS). Serine 998 carries the phosphoserine modification. Threonine 1004 carries the post-translational modification Phosphothreonine. Residues 1070–1161 (SSAEERMQSE…SEAQAVIQGA (92 aa)) are a coiled coil. A Phosphothreonine modification is found at threonine 1168. Disordered regions lie at residues 1172-1202 (LRIK…KDAD), 1242-1306 (ATPD…KEVS), 1359-1381 (VAPG…LSSP), and 1808-1841 (KLYH…SLDS). Serine 1179 bears the Phosphoserine mark. The segment covering 1179 to 1198 (SSDSISSLNSITSHSSIGSS) has biased composition (low complexity). Positions 1244–1259 (PDSSAPSSPKLQHGST) are enriched in polar residues. The span at 1260–1281 (ETASPSIKSSTSSSVGTEVTET) shows a compositional bias: low complexity. Position 1263 is a phosphoserine (serine 1263). Residues 1301-1360 (EKKEVSELRSELWEKEMKLTDIRLEALNSAHQLDQLRETMHNMQLEVDLLKAENDRLKVA) are a coiled coil. Residues 1365–1381 (SGCTPGQVPGSSALSSP) are compositionally biased toward polar residues. At serine 1380 the chain carries Phosphoserine.

The protein belongs to the Nav/unc-53 family. As to quaternary structure, interacts with tubulin. In terms of tissue distribution, expressed in heart and brain. Present in brain (at protein level). In adult brain, found almost exclusively in areas of secondary neurogenesis from the hippocampus and the subventricular zone.

The protein resides in the cytoplasm. It localises to the cytoskeleton. Its function is as follows. May be involved in neuronal migration. This Mus musculus (Mouse) protein is Neuron navigator 1 (Nav1).